Reading from the N-terminus, the 293-residue chain is Immediate early response gene 5-like protein (293 aa).

It belongs to the IER family.

This Xenopus laevis (African clawed frog) protein is Immediate early response gene 5-like protein (ier5l).